The following is a 167-amino-acid chain: NADH-ubiquinone oxidoreductase chain 6 (167 aa).

Helical transmembrane passes span 24 to 44, 54 to 74, 85 to 105, and 135 to 155; these read PYFG…IILA, LLLI…ALVL, VLMK…GGYL, and WLLI…ILEI.

It belongs to the complex I subunit 6 family.

It is found in the mitochondrion membrane. The enzyme catalyses a ubiquinone + NADH + 5 H(+)(in) = a ubiquinol + NAD(+) + 4 H(+)(out). In terms of biological role, core subunit of the mitochondrial membrane respiratory chain NADH dehydrogenase (Complex I) that is believed to belong to the minimal assembly required for catalysis. Complex I functions in the transfer of electrons from NADH to the respiratory chain. The immediate electron acceptor for the enzyme is believed to be ubiquinone. This is NADH-ubiquinone oxidoreductase chain 6 (MT-ND6) from Myxine glutinosa (Atlantic hagfish).